Consider the following 310-residue polypeptide: Putative S-adenosyl-L-methionine-dependent methyltransferase MMAR_3534 (310 aa).

S-adenosyl-L-methionine contacts are provided by residues Asp-131 and 160–161 (DL).

The protein belongs to the UPF0677 family.

Its function is as follows. Exhibits S-adenosyl-L-methionine-dependent methyltransferase activity. The polypeptide is Putative S-adenosyl-L-methionine-dependent methyltransferase MMAR_3534 (Mycobacterium marinum (strain ATCC BAA-535 / M)).